Here is a 237-residue protein sequence, read N- to C-terminus: Ribonuclease 3 (237 aa).

The RNase III domain maps to 4 to 133 (LTELEKSLGV…VLAAIYLDKG (130 aa)). Glu-46 is a Mg(2+) binding site. Residues Asp-50 and Glu-122 contribute to the active site. Glu-122 contributes to the Mg(2+) binding site. In terms of domain architecture, DRBM spans 160–229 (DYKSRLQELV…AKEALQQFEN (70 aa)).

The protein belongs to the ribonuclease III family. In terms of assembly, homodimer. Mg(2+) is required as a cofactor.

Its subcellular location is the cytoplasm. The enzyme catalyses Endonucleolytic cleavage to 5'-phosphomonoester.. Digests double-stranded RNA. Involved in the processing of primary rRNA transcript to yield the immediate precursors to the large and small rRNAs (23S and 16S). Processes some mRNAs, and tRNAs when they are encoded in the rRNA operon. Processes pre-crRNA and tracrRNA of type II CRISPR loci if present in the organism. This chain is Ribonuclease 3, found in Dehalococcoides mccartyi (strain ATCC BAA-2266 / KCTC 15142 / 195) (Dehalococcoides ethenogenes (strain 195)).